The primary structure comprises 296 residues: 6-hydroxypseudooxynicotine dehydrogenase complex subunit alpha (296 aa).

In terms of domain architecture, FAD-binding PCMH-type spans 1 to 177 (MKPPSFDYVV…VEVNVPQLPH (177 aa)). FAD contacts are provided by residues 30–37 (IIAGGQSL), 111–115 (TIGGS), and E124.

In terms of assembly, heterohexamer of 2 alpha (kdhA), 2 beta (kdhB) and 2 gamma (kdhC) subunit. Dimer of heterotrimers. Requires FAD as cofactor.

The catalysed reaction is 6-hydroxypseudooxynicotine + A + H2O = 2,6-dihydroxypseudooxynicotine + AH2. The protein operates within alkaloid degradation; nicotine degradation. Molybdo-flavoprotein enzyme complex involved in nicotine degradation. The subunit gamma (large subunit) contains the substrate-binding sites, the subunit alpha (medium subunit) binds FAD and the subunit beta (small subunit) has a 2Fe-2S ferredoxin-type domain which binds 2 2Fe-2S clusters. The polypeptide is 6-hydroxypseudooxynicotine dehydrogenase complex subunit alpha (kdhA) (Paenarthrobacter nicotinovorans (Arthrobacter nicotinovorans)).